Here is a 1755-residue protein sequence, read N- to C-terminus: Transposon Ty1-OL Gag-Pol polyprotein (1755 aa).

Polar residues-rich tracts occupy residues 1 to 23 (MESQ…SVTS), 48 to 60 (TKAN…TPAS), and 127 to 152 (QSQF…GNTF). Disordered regions lie at residues 1–93 (MESQ…MMTQ), 126–173 (PQSQ…RPPP), and 352–421 (GSRN…SKST). The span at 153-165 (TDSSSADSDMTST) shows a compositional bias: low complexity. The tract at residues 299-401 (NNGIHINNKV…NSKSKTARAH (103 aa)) is RNA-binding. Residues 402 to 418 (NVSTSNNSPSTDNDSIS) show a composition bias toward low complexity. Residue Ser-416 is modified to Phosphoserine. Asp-461 serves as the catalytic For protease activity; shared with dimeric partner. Residues 583–640 (NVHTSESTRKYPYPFIHRMLAHANAQTIRYSLKNNTITYFNESDVDWSSAIDYQCPDC) are integrase-type zinc finger-like. The 176-residue stretch at 660–835 (NSYEPFQYLH…AGLDISTLLP (176 aa)) folds into the Integrase catalytic domain. Mg(2+) contacts are provided by Asp-671 and Asp-736. Disordered stretches follow at residues 956–1087 (SKAV…ETEK), 1092–1111 (RSPS…NIVP), and 1130–1171 (DLPL…DSNA). The span at 960–969 (SPTDSTPPST) shows a compositional bias: low complexity. Residues 1005–1015 (STPQISNIEST) are compositionally biased toward polar residues. Basic and acidic residues predominate over residues 1038 to 1053 (ESSHASKSKDFRHSDS). 2 stretches are compositionally biased toward polar residues: residues 1054–1082 (YSEN…QISD) and 1101–1111 (PENNSSHNIVP). The Bipartite nuclear localization signal motif lies at 1178–1212 (KKRSLEDNETEIKVSRDTWNTKNMRSLEPPRSKKR). The Reverse transcriptase Ty1/copia-type domain maps to 1338-1476 (NNYYITQLDI…DILGLEIKYQ (139 aa)). Mg(2+)-binding residues include Asp-1346, Asp-1427, Asp-1428, Asp-1610, Glu-1652, and Asp-1685. An RNase H Ty1/copia-type domain is found at 1610-1752 (DASYGNQPYY…IKTFKLLTNK (143 aa)).

As to quaternary structure, the capsid protein forms a homotrimer, from which the VLPs are assembled. The protease is a homodimer, whose active site consists of two apposed aspartic acid residues. Post-translationally, initially, virus-like particles (VLPs) are composed of the structural unprocessed proteins Gag and Gag-Pol, and also contain the host initiator methionine tRNA (tRNA(i)-Met) which serves as a primer for minus-strand DNA synthesis, and a dimer of genomic Ty RNA. Processing of the polyproteins occurs within the particle and proceeds by an ordered pathway, called maturation. First, the protease (PR) is released by autocatalytic cleavage of the Gag-Pol polyprotein yielding capsid protein p45 and a Pol-p154 precursor protein. This cleavage is a prerequisite for subsequent processing of Pol-p154 at the remaining sites to release the mature structural and catalytic proteins. Maturation takes place prior to the RT reaction and is required to produce transposition-competent VLPs.

The protein localises to the cytoplasm. Its subcellular location is the nucleus. The enzyme catalyses DNA(n) + a 2'-deoxyribonucleoside 5'-triphosphate = DNA(n+1) + diphosphate. It catalyses the reaction Endonucleolytic cleavage to 5'-phosphomonoester.. Its function is as follows. Capsid protein (CA) is the structural component of the virus-like particle (VLP), forming the shell that encapsulates the retrotransposons dimeric RNA genome. The particles are assembled from trimer-clustered units and there are holes in the capsid shells that allow for the diffusion of macromolecules. CA also has nucleocapsid-like chaperone activity, promoting primer tRNA(i)-Met annealing to the multipartite primer-binding site (PBS), dimerization of Ty1 RNA and initiation of reverse transcription. Functionally, the aspartyl protease (PR) mediates the proteolytic cleavages of the Gag and Gag-Pol polyproteins after assembly of the VLP. Reverse transcriptase/ribonuclease H (RT) is a multifunctional enzyme that catalyzes the conversion of the retro-elements RNA genome into dsDNA within the VLP. The enzyme displays a DNA polymerase activity that can copy either DNA or RNA templates, and a ribonuclease H (RNase H) activity that cleaves the RNA strand of RNA-DNA heteroduplexes during plus-strand synthesis and hydrolyzes RNA primers. The conversion leads to a linear dsDNA copy of the retrotransposon that includes long terminal repeats (LTRs) at both ends. In terms of biological role, integrase (IN) targets the VLP to the nucleus, where a subparticle preintegration complex (PIC) containing at least integrase and the newly synthesized dsDNA copy of the retrotransposon must transit the nuclear membrane. Once in the nucleus, integrase performs the integration of the dsDNA into the host genome. In Saccharomyces cerevisiae (strain ATCC 204508 / S288c) (Baker's yeast), this protein is Transposon Ty1-OL Gag-Pol polyprotein (TY1B-OL).